The following is a 239-amino-acid chain: Glucosamine-6-phosphate deaminase (239 aa).

Residue Asp-62 is the Proton acceptor; for enolization step of the active site. Asn-128 (for ring-opening step) is an active-site residue. Residue His-130 is the Proton acceptor; for ring-opening step of the active site. Residue Glu-135 is the For ring-opening step of the active site.

This sequence belongs to the glucosamine/galactosamine-6-phosphate isomerase family. NagB subfamily.

The enzyme catalyses alpha-D-glucosamine 6-phosphate + H2O = beta-D-fructose 6-phosphate + NH4(+). It functions in the pathway amino-sugar metabolism; N-acetylneuraminate degradation; D-fructose 6-phosphate from N-acetylneuraminate: step 5/5. Functionally, catalyzes the reversible isomerization-deamination of glucosamine 6-phosphate (GlcN6P) to form fructose 6-phosphate (Fru6P) and ammonium ion. The polypeptide is Glucosamine-6-phosphate deaminase (Lactobacillus johnsonii (strain CNCM I-12250 / La1 / NCC 533)).